Here is a 534-residue protein sequence, read N- to C-terminus: CTP synthase (534 aa).

The segment at 1-267 (MTKYIFVTGG…DQIVCDHLKL (267 aa)) is amidoligase domain. Position 13 (Ser-13) interacts with CTP. A UTP-binding site is contributed by Ser-13. 14–19 (SIGKGI) serves as a coordination point for ATP. Residue Tyr-54 coordinates L-glutamine. Asp-71 is an ATP binding site. Residues Asp-71 and Glu-141 each coordinate Mg(2+). CTP is bound by residues 148–150 (DIE), 188–193 (KTKPTQ), and Lys-224. Residues 188–193 (KTKPTQ) and Lys-224 each bind UTP. 240–242 (RDV) serves as a coordination point for ATP. Positions 292–534 (KIALVGKYVE…FVTAAIKNSN (243 aa)) constitute a Glutamine amidotransferase type-1 domain. Gly-354 serves as a coordination point for L-glutamine. Catalysis depends on Cys-381, which acts as the Nucleophile; for glutamine hydrolysis. L-glutamine contacts are provided by residues 382–385 (LGMQ), Glu-405, and Arg-463. Active-site residues include His-508 and Glu-510.

This sequence belongs to the CTP synthase family. Homotetramer.

The catalysed reaction is UTP + L-glutamine + ATP + H2O = CTP + L-glutamate + ADP + phosphate + 2 H(+). It carries out the reaction L-glutamine + H2O = L-glutamate + NH4(+). It catalyses the reaction UTP + NH4(+) + ATP = CTP + ADP + phosphate + 2 H(+). Its pathway is pyrimidine metabolism; CTP biosynthesis via de novo pathway; CTP from UDP: step 2/2. Its activity is regulated as follows. Allosterically activated by GTP, when glutamine is the substrate; GTP has no effect on the reaction when ammonia is the substrate. The allosteric effector GTP functions by stabilizing the protein conformation that binds the tetrahedral intermediate(s) formed during glutamine hydrolysis. Inhibited by the product CTP, via allosteric rather than competitive inhibition. In terms of biological role, catalyzes the ATP-dependent amination of UTP to CTP with either L-glutamine or ammonia as the source of nitrogen. Regulates intracellular CTP levels through interactions with the four ribonucleotide triphosphates. In Streptococcus pyogenes serotype M1, this protein is CTP synthase.